Reading from the N-terminus, the 399-residue chain is Acetate kinase (399 aa).

Asn-10 contacts Mg(2+). Lys-17 contacts ATP. Arg-91 contacts substrate. Asp-150 (proton donor/acceptor) is an active-site residue. ATP contacts are provided by residues 210 to 214 (HLGNG), 285 to 287 (DFR), and 333 to 337 (GIGEN). A Mg(2+)-binding site is contributed by Glu-387.

It belongs to the acetokinase family. In terms of assembly, homodimer. Requires Mg(2+) as cofactor. The cofactor is Mn(2+).

It is found in the cytoplasm. It catalyses the reaction acetate + ATP = acetyl phosphate + ADP. It participates in metabolic intermediate biosynthesis; acetyl-CoA biosynthesis; acetyl-CoA from acetate: step 1/2. Functionally, catalyzes the formation of acetyl phosphate from acetate and ATP. Can also catalyze the reverse reaction. This Wigglesworthia glossinidia brevipalpis protein is Acetate kinase.